A 239-amino-acid polypeptide reads, in one-letter code: tRNA (guanine-N(7)-)-methyltransferase (239 aa).

S-adenosyl-L-methionine is bound by residues glutamate 69, glutamate 94, aspartate 121, and aspartate 144. The active site involves aspartate 144. Lysine 148 is a substrate binding site. The tract at residues 150 to 155 (RHNKRR) is interaction with RNA. Substrate contacts are provided by residues aspartate 180 and 217-220 (TKFE).

It belongs to the class I-like SAM-binding methyltransferase superfamily. TrmB family. Monomer.

The catalysed reaction is guanosine(46) in tRNA + S-adenosyl-L-methionine = N(7)-methylguanosine(46) in tRNA + S-adenosyl-L-homocysteine. It participates in tRNA modification; N(7)-methylguanine-tRNA biosynthesis. Functionally, catalyzes the formation of N(7)-methylguanine at position 46 (m7G46) in tRNA. This chain is tRNA (guanine-N(7)-)-methyltransferase, found in Salmonella typhimurium (strain LT2 / SGSC1412 / ATCC 700720).